We begin with the raw amino-acid sequence, 170 residues long: Xanthine-guanine phosphoribosyltransferase (170 aa).

5-phospho-alpha-D-ribose 1-diphosphate-binding positions include 41–42 (RG) and 98–106 (DDLTDTGKT). Residue Asp99 coordinates Mg(2+). Asp102 is a guanine binding site. Asp102 serves as a coordination point for xanthine. A GMP-binding site is contributed by 102-106 (DTGKT).

Belongs to the purine/pyrimidine phosphoribosyltransferase family. XGPT subfamily. As to quaternary structure, homotetramer. Requires Mg(2+) as cofactor.

It is found in the cell inner membrane. The enzyme catalyses GMP + diphosphate = guanine + 5-phospho-alpha-D-ribose 1-diphosphate. It catalyses the reaction XMP + diphosphate = xanthine + 5-phospho-alpha-D-ribose 1-diphosphate. The catalysed reaction is IMP + diphosphate = hypoxanthine + 5-phospho-alpha-D-ribose 1-diphosphate. The protein operates within purine metabolism; GMP biosynthesis via salvage pathway; GMP from guanine: step 1/1. Its pathway is purine metabolism; XMP biosynthesis via salvage pathway; XMP from xanthine: step 1/1. In terms of biological role, purine salvage pathway enzyme that catalyzes the transfer of the ribosyl-5-phosphate group from 5-phospho-alpha-D-ribose 1-diphosphate (PRPP) to the N9 position of the 6-oxopurines guanine and xanthine to form the corresponding ribonucleotides GMP (guanosine 5'-monophosphate) and XMP (xanthosine 5'-monophosphate), with the release of PPi. To a lesser extent, also acts on hypoxanthine. The sequence is that of Xanthine-guanine phosphoribosyltransferase from Brucella abortus (strain 2308).